Reading from the N-terminus, the 500-residue chain is Ephrin type-B receptor 3 (500 aa).

The Fibronectin type-III domain occupies 1-64 (PLLVLDLIIQ…NPVDFSTSLY (64 aa)). At 1–113 (PLLVLDLIIQ…ERSVQDLLPL (113 aa)) the chain is on the extracellular side. The interval 76 to 103 (HLRRREELTTTTTGLKSREERFQKSDDP) is disordered. Positions 91 to 103 (KSREERFQKSDDP) are enriched in basic and acidic residues. Residues 114 to 134 (IVGSASAGFVVILAMIVIAVV) form a helical membrane-spanning segment. At 135–500 (CLRRQRTGSE…QMSQTLPIRV (366 aa)) the chain is on the cytoplasmic side. A Phosphotyrosine; by autocatalysis modification is found at Tyr168. The 264-residue stretch at 187–450 (VKIEEVIGAG…QIVSTLDKFL (264 aa)) folds into the Protein kinase domain. ATP contacts are provided by residues 193–201 (IGAGEFGEV) and Lys219. The active-site Proton acceptor is the Asp312. Residues 421-500 (LHQLMLECWV…QMSQTLPIRV (80 aa)) enclose the SAM domain. Residues 498-500 (IRV) carry the PDZ-binding motif.

It belongs to the protein kinase superfamily. Tyr protein kinase family. Ephrin receptor subfamily. In terms of assembly, heterotetramer upon binding of the ligand. The heterotetramer is composed of an ephrin dimer and a receptor dimer. Oligomerization is probably required to induce biological responses. Phosphorylated. Autophosphorylates upon ligand-binding. Autophosphorylation on Tyr-168 is required for interaction with SH2 domain-containing proteins. Widely expressed in the developing nervous system.

It localises to the cell membrane. Its subcellular location is the cell projection. The protein resides in the dendrite. The enzyme catalyses L-tyrosyl-[protein] + ATP = O-phospho-L-tyrosyl-[protein] + ADP + H(+). Receptor tyrosine kinase which binds promiscuously transmembrane ephrin-B family ligands residing on adjacent cells, leading to contact-dependent bidirectional signaling into neighboring cells. The signaling pathway downstream of the receptor is referred to as forward signaling while the signaling pathway downstream of the ephrin ligand is referred to as reverse signaling. Generally has an overlapping and redundant function with EPHB2. Like EPHB2, functions in axon guidance during development. In addition to its role in axon guidance also plays an important redundant role with other ephrin-B receptors in development and maturation of dendritic spines and the formation of excitatory synapses. May control other aspects of development through regulation of cell migration and positioning. May play a role in early pattern formation within the developing nervous system. The chain is Ephrin type-B receptor 3 (ephb3) from Danio rerio (Zebrafish).